A 605-amino-acid polypeptide reads, in one-letter code: Protein kinase wis1 (605 aa).

A compositionally biased stretch (polar residues) spans 1–20 (MSSPNNQPLSCSLRQLSISP). The interval 1–141 (MSSPNNQPLS…TPPGPFPGGL (141 aa)) is disordered. Low complexity-rich tracts occupy residues 31–73 (GSLL…SSPS) and 90–105 (RLGR…SLNL). The segment covering 106-115 (DMKDPSEKPR) has biased composition (basic and acidic residues). The residue at position 168 (Ser-168) is a Phosphoserine. The segment covering 188–200 (SQLAGRLSNSPVK) has biased composition (polar residues). Residues 188 to 263 (SQLAGRLSNS…PSSMASRRGL (76 aa)) are disordered. Residues 244–256 (SNSNPTSPVSPSS) show a composition bias toward low complexity. Position 253 is a phosphoserine (Ser-253). The 260-residue stretch at 320–579 (IIKLEELGKG…YHELANHPWL (260 aa)) folds into the Protein kinase domain. ATP contacts are provided by residues 326–334 (LGKGNYGVV) and Lys-349. The active-site Proton acceptor is the Asp-441. Ser-469 is modified (phosphoserine). Phosphothreonine is present on Thr-473.

The protein belongs to the protein kinase superfamily. STE Ser/Thr protein kinase family. MAP kinase kinase subfamily. Dephosphorylated by pyp1 and pyp2.

It catalyses the reaction L-seryl-[protein] + ATP = O-phospho-L-seryl-[protein] + ADP + H(+). It carries out the reaction L-threonyl-[protein] + ATP = O-phospho-L-threonyl-[protein] + ADP + H(+). The catalysed reaction is L-tyrosyl-[protein] + ATP = O-phospho-L-tyrosyl-[protein] + ADP + H(+). Dosage-dependent regulator of mitosis with serine/ threonine protein kinase activity. May play a role in the integration of nutritional sensing with the control over entry into mitosis. It may interact with cdc25, wee1 and win1. May activate sty1. This is Protein kinase wis1 (wis1) from Schizosaccharomyces pombe (strain 972 / ATCC 24843) (Fission yeast).